Here is a 302-residue protein sequence, read N- to C-terminus: Nucleotide-binding protein STH186 (302 aa).

15-22 is a binding site for ATP; it reads GMSGAGKT. 66–69 serves as a coordination point for GTP; that stretch reads DIRG.

This sequence belongs to the RapZ-like family.

In terms of biological role, displays ATPase and GTPase activities. The protein is Nucleotide-binding protein STH186 of Symbiobacterium thermophilum (strain DSM 24528 / JCM 14929 / IAM 14863 / T).